Here is a 152-residue protein sequence, read N- to C-terminus: Nucleoside diphosphate kinase B (152 aa).

Residues 1-66 (MANLERTFIA…DRPFFPGLVK (66 aa)) form an interaction with AKAP13 region. Positions 12, 60, 88, 94, 105, and 115 each coordinate ATP. H118 functions as the Pros-phosphohistidine intermediate in the catalytic mechanism.

Belongs to the NDK family. As to quaternary structure, hexamer of two different chains: An and B (A6, A5B, A4B2, A3B3, A2B4, AB5, B6). Interacts with CAPN8. Interacts with AKAP13. Interacts with ITGB1BP1 (via C-terminal domain region). Interacts with BCL2L10. Mg(2+) serves as cofactor. In terms of processing, the N-terminus is blocked.

The protein localises to the cytoplasm. Its subcellular location is the cell projection. The protein resides in the lamellipodium. It is found in the ruffle. It localises to the nucleus. It catalyses the reaction a 2'-deoxyribonucleoside 5'-diphosphate + ATP = a 2'-deoxyribonucleoside 5'-triphosphate + ADP. It carries out the reaction a ribonucleoside 5'-diphosphate + ATP = a ribonucleoside 5'-triphosphate + ADP. The enzyme catalyses ATP + protein L-histidine = ADP + protein N-phospho-L-histidine.. Its function is as follows. Major role in the synthesis of nucleoside triphosphates other than ATP. The ATP gamma phosphate is transferred to the NDP beta phosphate via a ping-pong mechanism, using a phosphorylated active-site intermediate. Negatively regulates Rho activity by interacting with AKAP13/LBC. Acts as a transcriptional activator of the MYC gene; binds DNA non-specifically. Binds to both single-stranded guanine- and cytosine-rich strands within the nuclease hypersensitive element (NHE) III(1) region of the MYC gene promoter. Does not bind to duplex NHE III(1). Has G-quadruplex (G4) DNA-binding activity, which is independent of its nucleotide-binding and kinase activity. Binds both folded and unfolded G4 with similar low nanomolar affinities. Stabilizes folded G4s regardless of whether they are prefolded or not. Exhibits histidine protein kinase activity. This chain is Nucleoside diphosphate kinase B (Nme2), found in Rattus norvegicus (Rat).